The sequence spans 448 residues: Protease Do-like 8, chloroplastic (448 aa).

Positions 152–333 (EGNGSGVVWD…IPSSTVLKIV (182 aa)) are serine protease. Active-site charge relay system residues include His171, Asp214, and Ser292. Residues 336–433 (LIQFSKVLRA…DKVTLKIKRG (98 aa)) enclose the PDZ domain.

Belongs to the peptidase S1C family.

It localises to the plastid. The protein localises to the chloroplast thylakoid lumen. Functionally, probable serine protease. The protein is Protease Do-like 8, chloroplastic (DEGP8) of Arabidopsis thaliana (Mouse-ear cress).